The primary structure comprises 629 residues: 1-deoxy-D-xylulose-5-phosphate synthase (629 aa).

Thiamine diphosphate-binding positions include His-79 and 119–121; that span reads SHA. Asp-150 provides a ligand contact to Mg(2+). Residues 151-152, Asn-180, Tyr-292, and Glu-377 each bind thiamine diphosphate; that span reads GS. Asn-180 lines the Mg(2+) pocket.

Belongs to the transketolase family. DXPS subfamily. As to quaternary structure, homodimer. Mg(2+) is required as a cofactor. It depends on thiamine diphosphate as a cofactor.

It catalyses the reaction D-glyceraldehyde 3-phosphate + pyruvate + H(+) = 1-deoxy-D-xylulose 5-phosphate + CO2. It participates in metabolic intermediate biosynthesis; 1-deoxy-D-xylulose 5-phosphate biosynthesis; 1-deoxy-D-xylulose 5-phosphate from D-glyceraldehyde 3-phosphate and pyruvate: step 1/1. In terms of biological role, catalyzes the acyloin condensation reaction between C atoms 2 and 3 of pyruvate and glyceraldehyde 3-phosphate to yield 1-deoxy-D-xylulose-5-phosphate (DXP). The chain is 1-deoxy-D-xylulose-5-phosphate synthase from Tropheryma whipplei (strain TW08/27) (Whipple's bacillus).